Reading from the N-terminus, the 24-residue chain is Coenzyme PQQ synthesis protein A (24 aa).

A cross-link (pyrroloquinoline quinone (Glu-Tyr)) is located at residues 16–20 (EVTMY).

The protein belongs to the PqqA family.

It functions in the pathway cofactor biosynthesis; pyrroloquinoline quinone biosynthesis. Its function is as follows. Required for coenzyme pyrroloquinoline quinone (PQQ) biosynthesis. PQQ is probably formed by cross-linking a specific glutamate to a specific tyrosine residue and excising these residues from the peptide. This chain is Coenzyme PQQ synthesis protein A, found in Acinetobacter baumannii (strain SDF).